Here is a 171-residue protein sequence, read N- to C-terminus: Endoribonuclease YbeY (171 aa).

Zn(2+)-binding residues include histidine 126, histidine 130, and histidine 136.

This sequence belongs to the endoribonuclease YbeY family. Zn(2+) is required as a cofactor.

It localises to the cytoplasm. Single strand-specific metallo-endoribonuclease involved in late-stage 70S ribosome quality control and in maturation of the 3' terminus of the 16S rRNA. In Rhizobium johnstonii (strain DSM 114642 / LMG 32736 / 3841) (Rhizobium leguminosarum bv. viciae), this protein is Endoribonuclease YbeY.